Consider the following 443-residue polypeptide: Probable D-serine dehydratase (443 aa).

Lysine 116 carries the post-translational modification N6-(pyridoxal phosphate)lysine.

This sequence belongs to the serine/threonine dehydratase family. DsdA subfamily. Pyridoxal 5'-phosphate is required as a cofactor.

It catalyses the reaction D-serine = pyruvate + NH4(+). This Bacillus cereus (strain B4264) protein is Probable D-serine dehydratase.